The chain runs to 490 residues: MAATTTEKKQLRIATRNCGFIDPESIDDYIALRGYEGLAKVLTMTPAEVVDLVKRSGLRGRGGAGFPTGIKWGIALGNKADQKYMVCNADEGDPEFMDRAVLEGDPHSVVEAMAIGGYAIGATRGTVYIRAEYPLAIKRLKKAIDDAREYGLLGENIFGSGFDFDIELKYGAGAFVCGEETALIRSMEGKRGEPVTKPPFPAQSGYWEKPTIVNNVETFANIPAIIINGADWFSGIGTATSKGTKVFALAGKIQNVGLIEVPMGISLREVIFDIGGGCPDGKAFKAVQTGGPSGGALANKDLDVAIDYESLAACKSIMGSGGMVVMDEDDCMVSVAKFFLDFTMDETCGKCTPCRIGSKRLYEILDRITKGKGTRADLDRLKSLSEIIKDTALCGLGQTMPNPILSTMDTFANEYEAHVDDKKCPAHVCTALLTYTIDPAKCTGCGLCTRVCPVECISGTKKQPHTIDTTRCIKCGACYDKCKFDSIIKQ.

2 consecutive 4Fe-4S ferredoxin-type domains span residues 433-462 and 463-490; these read LTYT…GTKK and QPHT…IIKQ.

Belongs to the complex I 51 kDa subunit family. Heterotetramer composed of HndA, HndB, HndC and HndD subunits. HndC is probably the reducing subunit.

The enzyme catalyses H2 + NADP(+) = NADPH + H(+). With respect to regulation, inhibited by oxygen. In terms of biological role, catalyzes the reduction of NADP in the presence of molecular H2 to yield NADPH. The chain is NADP-reducing hydrogenase subunit HndC (hndC) from Solidesulfovibrio fructosivorans (Desulfovibrio fructosivorans).